Consider the following 312-residue polypeptide: DDRGK domain-containing protein 1 (312 aa).

Topologically, residues 1-2 (ME) are lumenal. A helical membrane pass occupies residues 3 to 23 (LIILVGIATALLVVIITLYLL). At 24–312 (QKKNAAPETK…ISAGGEEASS (289 aa)) the chain is on the cytoplasmic side. The span at 59 to 79 (NQRNRLRQNAPAAPAGQVAPA) shows a compositional bias: low complexity. The tract at residues 59 to 162 (NQRNRLRQNA…RKHQEDLEAE (104 aa)) is disordered. The span at 110–162 (LDEKMGAKKRAKMEAKEQKRLQREQELHDREQRKVKEAKEEAERKHQEDLEAE) shows a compositional bias: basic and acidic residues.

The protein belongs to the DDRGK1 family. Interacts with Atg9; the interaction is transient.

It is found in the endoplasmic reticulum membrane. Substrate adapter for ufmylation, the covalent attachment of the ubiquitin-like modifier UFM1 to substrate proteins. Required for ufmylation of Atg9; protects the nervous system during aging, possibly by stabilizing Atg9 and supporting its function. The polypeptide is DDRGK domain-containing protein 1 (Drosophila yakuba (Fruit fly)).